A 192-amino-acid polypeptide reads, in one-letter code: Ion-translocating oxidoreductase complex subunit A (192 aa).

A run of 6 helical transmembrane segments spans residues 5-25 (ILLLVGTVLVNNFVLVKFLGL), 39-59 (IGMGLATTFVLTLASVCAYLV), 67-87 (LGIEYLRTMSFILVIAVVVQF), 102-122 (LLGIFLPLITTNCAVLGVALL), 134-154 (IIYGFGAAVGFSLVLILFASM), and 171-191 (SIAMITAGLMSLAFMGFTGLV).

It belongs to the NqrDE/RnfAE family. In terms of assembly, the complex is composed of six subunits: RnfA, RnfB, RnfC, RnfD, RnfE and RnfG.

It localises to the cell inner membrane. Functionally, part of a membrane-bound complex that couples electron transfer with translocation of ions across the membrane. In Vibrio campbellii (strain ATCC BAA-1116), this protein is Ion-translocating oxidoreductase complex subunit A.